A 351-amino-acid chain; its full sequence is Ca(2+)/H(+) antiporter ChaA (351 aa).

11 consecutive transmembrane segments (helical) span residues 4–24 (IFFI…LMHW), 25–45 (PSAV…SYMG), 59–79 (IGGL…SLFA), 86–106 (GIVL…VAGL), 130–150 (GLLI…SVGM), 156–176 (LNLS…ALYF), 205–225 (VATI…ENLV), 241–261 (FIGV…SAII), 282–302 (IAMF…TSMP), 303–323 (LVFT…MIAI), and 331–351 (WFEG…FFLL).

This sequence belongs to the Ca(2+):cation antiporter (CaCA) (TC 2.A.19) family. Cation/proton exchanger (CAX) subfamily. As to quaternary structure, homotrimer.

Its subcellular location is the cell membrane. Its activity is regulated as follows. Calcium efflux is tightly regulated by intracellular pH. In terms of biological role, ca(+)/H(+) antiporter that extrudes calcium in exchange for external protons. Does not transport sodium or potassium. The sequence is that of Ca(2+)/H(+) antiporter ChaA (chaA) from Bacillus subtilis (strain 168).